Here is a 43-residue protein sequence, read N- to C-terminus: Protein PsbN (43 aa).

A helical membrane pass occupies residues 4-24; sequence AIVLIISVGAALVAVTGYGIY.

Belongs to the PsbN family.

The protein resides in the cellular thylakoid membrane. Its function is as follows. May play a role in photosystem I and II biogenesis. The chain is Protein PsbN from Trichormus variabilis (strain ATCC 29413 / PCC 7937) (Anabaena variabilis).